The sequence spans 226 residues: Cytidylate kinase (226 aa).

Position 14–22 (14–22 (GPAGAGKST)) interacts with ATP.

Belongs to the cytidylate kinase family. Type 1 subfamily.

The protein resides in the cytoplasm. The catalysed reaction is CMP + ATP = CDP + ADP. It carries out the reaction dCMP + ATP = dCDP + ADP. The polypeptide is Cytidylate kinase (Symbiobacterium thermophilum (strain DSM 24528 / JCM 14929 / IAM 14863 / T)).